A 119-amino-acid polypeptide reads, in one-letter code: Protein TusC (119 aa).

It belongs to the DsrF/TusC family. As to quaternary structure, heterohexamer, formed by a dimer of trimers. The hexameric TusBCD complex contains 2 copies each of TusB, TusC and TusD. The TusBCD complex interacts with TusE.

The protein localises to the cytoplasm. Part of a sulfur-relay system required for 2-thiolation of 5-methylaminomethyl-2-thiouridine (mnm(5)s(2)U) at tRNA wobble positions. The sequence is that of Protein TusC from Photorhabdus laumondii subsp. laumondii (strain DSM 15139 / CIP 105565 / TT01) (Photorhabdus luminescens subsp. laumondii).